We begin with the raw amino-acid sequence, 682 residues long: ATP-dependent DNA helicase RecG (682 aa).

Residues 46–139 (ELRDLEEVKH…LKNGPHQEDK (94 aa)) form a wedge domain region. One can recognise a Helicase ATP-binding domain in the interval 271–432 (DMSSPYRMNR…VFGEMDVSVI (162 aa)). 284–291 (GDVGSGKT) lines the ATP pocket. Residues 385 to 388 (DEQH) carry the DEAH box motif. Residues 451–611 (MLDRILAFVE…GFELSEKDLE (161 aa)) form the Helicase C-terminal domain.

Belongs to the helicase family. RecG subfamily. As to quaternary structure, monomer. Interacts with SSB (sbbA), via the latter's 6 C-terminal residues. Colocalizes with DNA pol III subunit gamma/tau (dnaX).

The protein resides in the cytoplasm. It localises to the nucleoid. It catalyses the reaction Couples ATP hydrolysis with the unwinding of duplex DNA by translocating in the 3'-5' direction.. The enzyme catalyses ATP + H2O = ADP + phosphate + H(+). With respect to regulation, replication fork regression on Holliday junctions (HJ) is inhibited by DisA; DisA inhibits the ATPase activity of RecG. Its function is as follows. Critical role in recombination and DNA repair. Helps process Holliday junction intermediates to mature products by catalyzing branch migration. Has a DNA unwinding activity characteristic of a DNA helicase with 3'-5' polarity. Unwinds branched duplex DNA (Y-DNA), Holliday junction (HJ) DNA and partially replicated forks as well as catalyzing fork reversal/regression. Does not seem to unwind R-loops. Inhibits the diadenylate cyclase (DAC) activity of DisA in the presence but not absence of HJ DNA, possibly by relocating DisA from the junction. In Bacillus subtilis (strain 168), this protein is ATP-dependent DNA helicase RecG.